The chain runs to 227 residues: Probable proteasome subunit beta type-2 (227 aa).

Residues Met1–Gly6 constitute a propeptide, removed in mature form. Thr7 functions as the Nucleophile in the catalytic mechanism.

Belongs to the peptidase T1B family. In terms of assembly, the 26S proteasome consists of a 20S proteasome core and two 19S regulatory subunits. The 20S proteasome core is composed of 28 subunits that are arranged in four stacked rings, resulting in a barrel-shaped structure. The two end rings are each formed by seven alpha subunits, and the two central rings are each formed by seven beta subunits. The catalytic chamber with the active sites is on the inside of the barrel.

The protein resides in the cytoplasm. Its subcellular location is the nucleus. The catalysed reaction is Cleavage of peptide bonds with very broad specificity.. Functionally, the proteasome degrades poly-ubiquitinated proteins in the cytoplasm and in the nucleus. It is essential for the regulated turnover of proteins and for the removal of misfolded proteins. The proteasome is a multicatalytic proteinase complex that is characterized by its ability to cleave peptides with Arg, Phe, Tyr, Leu, and Glu adjacent to the leaving group at neutral or slightly basic pH. It has an ATP-dependent proteolytic activity. The sequence is that of Probable proteasome subunit beta type-2 (PUP1) from Encephalitozoon cuniculi (strain GB-M1) (Microsporidian parasite).